We begin with the raw amino-acid sequence, 201 residues long: 3-isopropylmalate dehydratase small subunit (201 aa).

This sequence belongs to the LeuD family. LeuD type 1 subfamily. As to quaternary structure, heterodimer of LeuC and LeuD.

It catalyses the reaction (2R,3S)-3-isopropylmalate = (2S)-2-isopropylmalate. It participates in amino-acid biosynthesis; L-leucine biosynthesis; L-leucine from 3-methyl-2-oxobutanoate: step 2/4. Its function is as follows. Catalyzes the isomerization between 2-isopropylmalate and 3-isopropylmalate, via the formation of 2-isopropylmaleate. The sequence is that of 3-isopropylmalate dehydratase small subunit from Brucella anthropi (strain ATCC 49188 / DSM 6882 / CCUG 24695 / JCM 21032 / LMG 3331 / NBRC 15819 / NCTC 12168 / Alc 37) (Ochrobactrum anthropi).